The chain runs to 100 residues: Small ribosomal subunit protein uS14c (100 aa).

The protein belongs to the universal ribosomal protein uS14 family. In terms of assembly, part of the 30S ribosomal subunit.

It is found in the plastid. The protein localises to the chloroplast. In terms of biological role, binds 16S rRNA, required for the assembly of 30S particles. This Pyropia yezoensis (Susabi-nori) protein is Small ribosomal subunit protein uS14c.